A 399-amino-acid polypeptide reads, in one-letter code: Protein HYM1 (399 aa).

Low complexity predominate over residues 363 to 382; that stretch reads VSNNNASSSNVASITSPSSV. A disordered region spans residues 363 to 399; the sequence is VSNNNASSSNVASITSPSSVMNNQSSILTHSTSPDSR. Positions 383 to 399 are enriched in polar residues; sequence MNNQSSILTHSTSPDSR.

The protein belongs to the Mo25 family.

This Saccharomyces cerevisiae (strain ATCC 204508 / S288c) (Baker's yeast) protein is Protein HYM1 (HYM1).